The primary structure comprises 377 residues: Probable riboflavin import permease protein RfuC (377 aa).

Transmembrane regions (helical) follow at residues V4–L24, A49–K69, M72–L92, V98–L118, I135–V155, F182–F202, F223–L245, F249–Y268, A274–M294, and L303–I323.

This sequence belongs to the binding-protein-dependent transport system permease family. In terms of assembly, the complex is probably composed of two ATP-binding proteins (RfuB), two transmembrane proteins (RfuC and RfuD) and a solute-binding protein (RfuA).

Its subcellular location is the cell inner membrane. Its function is as follows. Probably part of the ABC transporter complex RfuABCD involved in riboflavin import. Probably responsible for the translocation of the substrate across the membrane. The protein is Probable riboflavin import permease protein RfuC of Treponema pallidum (strain Nichols).